The primary structure comprises 405 residues: L-carnitine CoA-transferase (405 aa).

Positions 97 and 104 each coordinate CoA. The active-site Nucleophile is Asp-169.

The protein belongs to the CoA-transferase III family. CaiB subfamily. As to quaternary structure, homodimer.

It localises to the cytoplasm. It catalyses the reaction crotonobetainyl-CoA + (R)-carnitine = crotonobetaine + (R)-carnitinyl-CoA. It carries out the reaction 4-(trimethylamino)butanoyl-CoA + (R)-carnitine = (R)-carnitinyl-CoA + 4-(trimethylamino)butanoate. Its pathway is amine and polyamine metabolism; carnitine metabolism. Catalyzes the reversible transfer of the CoA moiety from gamma-butyrobetainyl-CoA to L-carnitine to generate L-carnitinyl-CoA and gamma-butyrobetaine. Is also able to catalyze the reversible transfer of the CoA moiety from gamma-butyrobetainyl-CoA or L-carnitinyl-CoA to crotonobetaine to generate crotonobetainyl-CoA. The protein is L-carnitine CoA-transferase of Salmonella choleraesuis (strain SC-B67).